An 841-amino-acid polypeptide reads, in one-letter code: Probable outer membrane usher protein EcpC (841 aa).

The N-terminal stretch at 1-29 (MPLRRFSPGLKAQFAFGMVFLFVQPDASA) is a signal peptide.

This sequence belongs to the EcpC/MatD family.

Functionally, part of the ecpRABCDE operon, which encodes the E.coli common pilus (ECP). ECP is found in both commensal and pathogenic strains and plays a dual role in early-stage biofilm development and host cell recognition. The protein is Probable outer membrane usher protein EcpC (ecpC) of Escherichia coli O127:H6 (strain E2348/69 / EPEC).